Consider the following 48-residue polypeptide: uncharacterized protein (48 aa).

The protein belongs to the ELIP/psbS family.

It localises to the plastid. The protein resides in the chloroplast. Functionally, possible role in chlorophyll and/or carotenoid binding. This is an uncharacterized protein from Porphyra purpurea (Red seaweed).